The primary structure comprises 300 residues: 4-hydroxy-tetrahydrodipicolinate synthase (300 aa).

A pyruvate-binding site is contributed by Thr-46. Tyr-134 serves as the catalytic Proton donor/acceptor. Residue Lys-162 is the Schiff-base intermediate with substrate of the active site. A pyruvate-binding site is contributed by Ile-207.

The protein belongs to the DapA family. Homotetramer; dimer of dimers.

It is found in the cytoplasm. It carries out the reaction L-aspartate 4-semialdehyde + pyruvate = (2S,4S)-4-hydroxy-2,3,4,5-tetrahydrodipicolinate + H2O + H(+). The protein operates within amino-acid biosynthesis; L-lysine biosynthesis via DAP pathway; (S)-tetrahydrodipicolinate from L-aspartate: step 3/4. Functionally, catalyzes the condensation of (S)-aspartate-beta-semialdehyde [(S)-ASA] and pyruvate to 4-hydroxy-tetrahydrodipicolinate (HTPA). The protein is 4-hydroxy-tetrahydrodipicolinate synthase of Protochlamydia amoebophila (strain UWE25).